The chain runs to 572 residues: Proline--tRNA ligase (572 aa).

This sequence belongs to the class-II aminoacyl-tRNA synthetase family. ProS type 1 subfamily. In terms of assembly, homodimer.

The protein localises to the cytoplasm. It catalyses the reaction tRNA(Pro) + L-proline + ATP = L-prolyl-tRNA(Pro) + AMP + diphosphate. Functionally, catalyzes the attachment of proline to tRNA(Pro) in a two-step reaction: proline is first activated by ATP to form Pro-AMP and then transferred to the acceptor end of tRNA(Pro). As ProRS can inadvertently accommodate and process non-cognate amino acids such as alanine and cysteine, to avoid such errors it has two additional distinct editing activities against alanine. One activity is designated as 'pretransfer' editing and involves the tRNA(Pro)-independent hydrolysis of activated Ala-AMP. The other activity is designated 'posttransfer' editing and involves deacylation of mischarged Ala-tRNA(Pro). The misacylated Cys-tRNA(Pro) is not edited by ProRS. In Yersinia enterocolitica serotype O:8 / biotype 1B (strain NCTC 13174 / 8081), this protein is Proline--tRNA ligase.